A 161-amino-acid chain; its full sequence is NADH-quinone oxidoreductase subunit I (161 aa).

4Fe-4S ferredoxin-type domains lie at 52–82 (LRRY…IESE) and 92–121 (SRYD…ETRV). [4Fe-4S] cluster-binding residues include C62, C65, C68, C72, C101, C104, C107, and C111.

This sequence belongs to the complex I 23 kDa subunit family. NDH-1 is composed of 14 different subunits. Subunits NuoA, H, J, K, L, M, N constitute the membrane sector of the complex. The cofactor is [4Fe-4S] cluster.

The protein localises to the cell inner membrane. The catalysed reaction is a quinone + NADH + 5 H(+)(in) = a quinol + NAD(+) + 4 H(+)(out). NDH-1 shuttles electrons from NADH, via FMN and iron-sulfur (Fe-S) centers, to quinones in the respiratory chain. The immediate electron acceptor for the enzyme in this species is believed to be ubiquinone. Couples the redox reaction to proton translocation (for every two electrons transferred, four hydrogen ions are translocated across the cytoplasmic membrane), and thus conserves the redox energy in a proton gradient. In Azoarcus sp. (strain BH72), this protein is NADH-quinone oxidoreductase subunit I.